Reading from the N-terminus, the 511-residue chain is Sphingosine-1-phosphate transporter MFSD2B (511 aa).

Transmembrane regions (helical) follow at residues 108–128, 136–156, 236–256, 280–300, 323–343, 357–377, 379–399, 415–435, and 462–482; these read MPWMLGCTPFLVVSYFLLWFV, VLWYLAFFSCFQALSTAYHVP, IAAGIIGCLYLLCISVLFLGV, TMQFGPYLNLISSFLLISAAV, NLVLTILIAAVLSIPFWQWFL, LMIPFSIMLVTISSLVVAYVV, VASGLSIAASLLLPWSMLPDV, AIFYSSFVFFTKLSAGIALGI, and LLIGAAPALMIIIGLTILAFY.

It belongs to the major facilitator superfamily.

Its subcellular location is the cell membrane. The enzyme catalyses sphing-4-enine 1-phosphate(in) = sphing-4-enine 1-phosphate(out). It carries out the reaction sphinganine 1-phosphate(in) = sphinganine 1-phosphate(out). The catalysed reaction is sphinga-4E,14Z-dienine-1-phosphate(in) = sphinga-4E,14Z-dienine-1-phosphate(out). Lipid transporter that specifically mediates export of sphingosine-1-phosphate in red blood cells and platelets. Sphingosine-1-phosphate is a signaling sphingolipid and its export from red blood cells into in the plasma is required for red blood cell morphology. Sphingosine-1-phosphate export from platelets is required for platelet aggregation and thrombus formation. In addition to export, also able to mediate S1P import. The chain is Sphingosine-1-phosphate transporter MFSD2B from Xenopus tropicalis (Western clawed frog).